The chain runs to 45 residues: Large ribosomal subunit protein bL34 (45 aa).

The interval 1-45 is disordered; it reads MTKRTFGGTSRKRKRVSGFRVRMRSHTGRRVVRTRRKRGRSRLTV. The segment covering 10–45 has biased composition (basic residues); the sequence is SRKRKRVSGFRVRMRSHTGRRVVRTRRKRGRSRLTV.

Belongs to the bacterial ribosomal protein bL34 family.

The protein is Large ribosomal subunit protein bL34 of Prochlorococcus marinus (strain NATL2A).